We begin with the raw amino-acid sequence, 565 residues long: Periplasmic trehalase (565 aa).

The signal sequence occupies residues Met-1–Ala-30. Substrate-binding positions include Arg-152, Trp-159–Asp-160, Asn-196, Arg-205–Gln-207, Arg-277–Glu-279, and Gly-310. Catalysis depends on proton donor/acceptor residues Asp-312 and Glu-496. Glu-511 is a substrate binding site. Residues Pro-538 to Pro-565 are disordered. Residues Thr-548–Pro-565 show a composition bias toward polar residues.

Belongs to the glycosyl hydrolase 37 family. Monomer.

It is found in the periplasm. The enzyme catalyses alpha,alpha-trehalose + H2O = alpha-D-glucose + beta-D-glucose. Its function is as follows. Provides the cells with the ability to utilize trehalose at high osmolarity by splitting it into glucose molecules that can subsequently be taken up by the phosphotransferase-mediated uptake system. The sequence is that of Periplasmic trehalase from Escherichia coli (strain 55989 / EAEC).